A 332-amino-acid polypeptide reads, in one-letter code: MKVAVLGAGAWGTALAGHLAARHDTLLWARDAALIAGLQARHENSRYLDGIALPDALRYDADLGAALAHGAADDALCVIAAPVAGLRTLCHAMRDAGCVPAHVVWVCKGFEADTHLLPHQVIAAELPEQQSNGVLSGPSFAREVGRSLPVALTVASASAECRERTLAAFHHGAMRIYTGDDVVGVEVGGAVKNVLAIATGISDGLGLGLNARAALITRGLAEMSRLGVALGGRAETFTGLTGLGDLILTATGDLSRNRTVGLQLAAGRTLNDILGALGHVAEGVRCAQAVLALARAQSIDMPITQAVCGVLFDGIAPRDAVSGLLRRDARAE.

Residues Trp11, Arg30, and Lys108 each contribute to the NADPH site. The sn-glycerol 3-phosphate site is built by Lys108, Gly137, and Ser139. Ala141 provides a ligand contact to NADPH. 5 residues coordinate sn-glycerol 3-phosphate: Lys192, Asp245, Ser255, Arg256, and Asn257. Lys192 (proton acceptor) is an active-site residue. Arg256 provides a ligand contact to NADPH. Positions 280 and 282 each coordinate NADPH.

The protein belongs to the NAD-dependent glycerol-3-phosphate dehydrogenase family.

The protein localises to the cytoplasm. The enzyme catalyses sn-glycerol 3-phosphate + NAD(+) = dihydroxyacetone phosphate + NADH + H(+). The catalysed reaction is sn-glycerol 3-phosphate + NADP(+) = dihydroxyacetone phosphate + NADPH + H(+). The protein operates within membrane lipid metabolism; glycerophospholipid metabolism. In terms of biological role, catalyzes the reduction of the glycolytic intermediate dihydroxyacetone phosphate (DHAP) to sn-glycerol 3-phosphate (G3P), the key precursor for phospholipid synthesis. The sequence is that of Glycerol-3-phosphate dehydrogenase [NAD(P)+] from Burkholderia orbicola (strain MC0-3).